The following is a 77-amino-acid chain: MAVKLKIKKGDNVKVVTGDDKGKTGKVLAVYPKTLKVVVEGCKIAKKAIKPSEKNPNGGFINKEMPMDISNVAKVQE.

The protein belongs to the universal ribosomal protein uL24 family. Part of the 50S ribosomal subunit.

Functionally, one of two assembly initiator proteins, it binds directly to the 5'-end of the 23S rRNA, where it nucleates assembly of the 50S subunit. In terms of biological role, one of the proteins that surrounds the polypeptide exit tunnel on the outside of the subunit. The chain is Large ribosomal subunit protein uL24 from Campylobacter jejuni subsp. doylei (strain ATCC BAA-1458 / RM4099 / 269.97).